Here is a 463-residue protein sequence, read N- to C-terminus: Glycine--tRNA ligase (463 aa).

The substrate site is built by Arg-98 and Glu-174. ATP-binding positions include 206–208 (RNE), 216–221 (FRTREF), 290–291 (EL), and 334–337 (GADR). 221–225 (FEQME) contributes to the substrate binding site. Position 330 to 334 (330 to 334 (EPSLG)) interacts with substrate.

Belongs to the class-II aminoacyl-tRNA synthetase family. In terms of assembly, homodimer.

It localises to the cytoplasm. The catalysed reaction is tRNA(Gly) + glycine + ATP = glycyl-tRNA(Gly) + AMP + diphosphate. In terms of biological role, catalyzes the attachment of glycine to tRNA(Gly). The protein is Glycine--tRNA ligase of Staphylococcus aureus (strain bovine RF122 / ET3-1).